The chain runs to 332 residues: DNA-directed RNA polymerase subunit alpha (332 aa).

Residues 1 to 230 (MKKITTSAYM…KQMSIFNNVL (230 aa)) form an alpha N-terminal domain (alpha-NTD) region. The interval 246–332 (EHSKLLESVE…LRKKISELKS (87 aa)) is alpha C-terminal domain (alpha-CTD).

The protein belongs to the RNA polymerase alpha chain family. Homodimer. The RNAP catalytic core consists of 2 alpha, 1 beta, 1 beta' and 1 omega subunit. When a sigma factor is associated with the core the holoenzyme is formed, which can initiate transcription.

It carries out the reaction RNA(n) + a ribonucleoside 5'-triphosphate = RNA(n+1) + diphosphate. In terms of biological role, DNA-dependent RNA polymerase catalyzes the transcription of DNA into RNA using the four ribonucleoside triphosphates as substrates. The polypeptide is DNA-directed RNA polymerase subunit alpha (Campylobacter fetus subsp. fetus (strain 82-40)).